The following is a 497-amino-acid chain: Trichoplein keratin filament-binding protein (497 aa).

Coiled coils occupy residues 67–140 (HCEK…LLYE), 166–271 (ATQK…ELGR), and 327–479 (MKQV…AKTM). The interval 72–457 (KEEKRKILEL…WEAARQEEEE (386 aa)) is interaction with keratin proteins. Residues 167–188 (TQKEEKKQQEATEKQENKRLEN) are disordered. Basic and acidic residues predominate over residues 168-188 (QKEEKKQQEATEKQENKRLEN). The tract at residues 258–424 (RQMAALRRKT…KQLAQRAKEE (167 aa)) is trichohyalin/plectin homology domain. Residues 441 to 497 (AERQGQEWEAARQEEEEEEEARQAEEHSNALLQQEAKTMAEKGYQPKLHGHLRIAWD) form a disordered region. The segment covering 444 to 453 (QGQEWEAARQ) has biased composition (basic and acidic residues). The segment covering 488–497 (LHGHLRIAWD) has biased composition (basic residues).

It belongs to the TCHP family. In terms of assembly, interacts specifically with keratin proteins including, KRT5, KRT6A, KRT8, KRT14, KRT16 and KRT18. Interacts with KCTD17. In terms of processing, ubiquitinated. Ubiquitination by the BCR(KCTD17) E3 ubiquitin ligase complex results in proteasomal degradation, and induces ciliogenesis. As to expression, expressed in all tissues examined, including brain, liver, small intestine, large intestine, lung and heart. Found concentrated in tubular structures within hepatocytes, and in the apical cortical region and desmosomes of the apical junctional domain in enterocytes of the small intestine. In the hair follicle, localized at the outer root sheath. Also expressed in blood vessels (at protein level).

It localises to the cytoplasm. The protein resides in the cytoskeleton. The protein localises to the cell membrane. It is found in the mitochondrion. Its subcellular location is the microtubule organizing center. It localises to the centrosome. In terms of biological role, tumor suppressor which has the ability to inhibit cell growth and be pro-apoptotic during cell stress. May act as a 'capping' or 'branching' protein for keratin filaments in the cell periphery. May regulate K8/K18 filament and desmosome organization mainly at the apical or peripheral regions of simple epithelial cells. Is a negative regulator of ciliogenesis. The protein is Trichoplein keratin filament-binding protein of Mus musculus (Mouse).